A 256-amino-acid polypeptide reads, in one-letter code: Leucyl/phenylalanyl-tRNA--protein transferase (256 aa).

The interval 232–256 (DGCTGASRHGPGADMRRGDMSREST) is disordered. The segment covering 245–256 (DMRRGDMSREST) has biased composition (basic and acidic residues).

It belongs to the L/F-transferase family.

It localises to the cytoplasm. The catalysed reaction is N-terminal L-lysyl-[protein] + L-leucyl-tRNA(Leu) = N-terminal L-leucyl-L-lysyl-[protein] + tRNA(Leu) + H(+). The enzyme catalyses N-terminal L-arginyl-[protein] + L-leucyl-tRNA(Leu) = N-terminal L-leucyl-L-arginyl-[protein] + tRNA(Leu) + H(+). It catalyses the reaction L-phenylalanyl-tRNA(Phe) + an N-terminal L-alpha-aminoacyl-[protein] = an N-terminal L-phenylalanyl-L-alpha-aminoacyl-[protein] + tRNA(Phe). Functions in the N-end rule pathway of protein degradation where it conjugates Leu, Phe and, less efficiently, Met from aminoacyl-tRNAs to the N-termini of proteins containing an N-terminal arginine or lysine. The polypeptide is Leucyl/phenylalanyl-tRNA--protein transferase (Chromohalobacter salexigens (strain ATCC BAA-138 / DSM 3043 / CIP 106854 / NCIMB 13768 / 1H11)).